A 300-amino-acid chain; its full sequence is Meiotically up-regulated gene 165 protein (300 aa).

Disordered stretches follow at residues 1-38 and 50-109; these read MLEK…HKPS and TNSS…STLE. Residues 21–38 are compositionally biased toward polar residues; sequence ESHTFSSQTDDSYFHKPS. The span at 52–69 shows a compositional bias: low complexity; it reads SSVPSASRSPESIASSQS. Residues 94-103 show a composition bias toward basic residues; sequence TLRKRGRKPK.

The protein localises to the nucleus. Functionally, has a role in meiosis. This Schizosaccharomyces pombe (strain 972 / ATCC 24843) (Fission yeast) protein is Meiotically up-regulated gene 165 protein (mug165).